A 405-amino-acid polypeptide reads, in one-letter code: Cytoplasmic tRNA 2-thiolation protein 2 (405 aa).

The protein belongs to the CTU2/NCS2 family.

Its subcellular location is the cytoplasm. The protein operates within tRNA modification; 5-methoxycarbonylmethyl-2-thiouridine-tRNA biosynthesis. Its function is as follows. Plays a central role in 2-thiolation of mcm(5)S(2)U at tRNA wobble positions of tRNA(Lys), tRNA(Glu) and tRNA(Gln). May act by forming a heterodimer with NCS6/CTU1 that ligates sulfur from thiocarboxylated URM1 onto the uridine of tRNAs at wobble position. In Drosophila pseudoobscura pseudoobscura (Fruit fly), this protein is Cytoplasmic tRNA 2-thiolation protein 2.